Reading from the N-terminus, the 271-residue chain is 4-hydroxy-tetrahydrodipicolinate reductase (271 aa).

NAD(+)-binding positions include 12-17 (GGSGRM) and glutamate 38. NADP(+) is bound at residue arginine 39. Residues 102 to 104 (GTT) and 126 to 129 (APNM) contribute to the NAD(+) site. Histidine 159 acts as the Proton donor/acceptor in catalysis. (S)-2,3,4,5-tetrahydrodipicolinate is bound at residue histidine 160. The active-site Proton donor is lysine 163. 169–170 (GT) is a binding site for (S)-2,3,4,5-tetrahydrodipicolinate.

This sequence belongs to the DapB family.

Its subcellular location is the cytoplasm. The catalysed reaction is (S)-2,3,4,5-tetrahydrodipicolinate + NAD(+) + H2O = (2S,4S)-4-hydroxy-2,3,4,5-tetrahydrodipicolinate + NADH + H(+). The enzyme catalyses (S)-2,3,4,5-tetrahydrodipicolinate + NADP(+) + H2O = (2S,4S)-4-hydroxy-2,3,4,5-tetrahydrodipicolinate + NADPH + H(+). It participates in amino-acid biosynthesis; L-lysine biosynthesis via DAP pathway; (S)-tetrahydrodipicolinate from L-aspartate: step 4/4. In terms of biological role, catalyzes the conversion of 4-hydroxy-tetrahydrodipicolinate (HTPA) to tetrahydrodipicolinate. This chain is 4-hydroxy-tetrahydrodipicolinate reductase, found in Shewanella sediminis (strain HAW-EB3).